The chain runs to 186 residues: ATP synthase subunit delta (186 aa).

Belongs to the ATPase delta chain family. In terms of assembly, F-type ATPases have 2 components, F(1) - the catalytic core - and F(0) - the membrane proton channel. F(1) has five subunits: alpha(3), beta(3), gamma(1), delta(1), epsilon(1). F(0) has three main subunits: a(1), b(2) and c(10-14). The alpha and beta chains form an alternating ring which encloses part of the gamma chain. F(1) is attached to F(0) by a central stalk formed by the gamma and epsilon chains, while a peripheral stalk is formed by the delta and b chains.

The protein resides in the cell inner membrane. In terms of biological role, f(1)F(0) ATP synthase produces ATP from ADP in the presence of a proton or sodium gradient. F-type ATPases consist of two structural domains, F(1) containing the extramembraneous catalytic core and F(0) containing the membrane proton channel, linked together by a central stalk and a peripheral stalk. During catalysis, ATP synthesis in the catalytic domain of F(1) is coupled via a rotary mechanism of the central stalk subunits to proton translocation. Functionally, this protein is part of the stalk that links CF(0) to CF(1). It either transmits conformational changes from CF(0) to CF(1) or is implicated in proton conduction. This is ATP synthase subunit delta from Brucella canis (strain ATCC 23365 / NCTC 10854 / RM-666).